The primary structure comprises 909 residues: Nitrate reductase [NADH] (909 aa).

Cysteine 187 is a Mo-molybdopterin binding site. Residues 535–610 (SKMYSMSEVK…LEDFRIGELI (76 aa)) enclose the Cytochrome b5 heme-binding domain. 2 residues coordinate heme: histidine 570 and histidine 593. The FAD-binding FR-type domain occupies 652–764 (REKIPCKLVD…KGPLGHIEYQ (113 aa)). FAD contacts are provided by residues 704 to 707 (RAYT), 721 to 725 (VVKIY), phenylalanine 726, phenylalanine 733, 738 to 740 (QMS), and threonine 791.

The protein belongs to the nitrate reductase family. In terms of assembly, homodimer. FAD serves as cofactor. Heme is required as a cofactor. Requires Mo-molybdopterin as cofactor.

It catalyses the reaction nitrite + NAD(+) + H2O = nitrate + NADH + H(+). With respect to regulation, regulated by the nitrogen source and controlled by the circadian rhythm. Functionally, nitrate reductase is a key enzyme involved in the first step of nitrate assimilation in plants, fungi and bacteria. This is Nitrate reductase [NADH] (NIA) from Petunia hybrida (Petunia).